The chain runs to 137 residues: Probable Hsp20 family chaperone (137 aa).

Positions 25 to 137 (LTNNNNIMKT…PKEKHYIKLN (113 aa)) constitute a sHSP domain.

Belongs to the small heat shock protein (HSP20) family.

Probable chaperone. This Onion yellows phytoplasma (strain OY-M) protein is Probable Hsp20 family chaperone.